Here is a 162-residue protein sequence, read N- to C-terminus: Cytochrome c-type biogenesis protein CcmE (162 aa).

Topologically, residues 1-8 are cytoplasmic; the sequence is MNPRRKKR. Residues 9–29 traverse the membrane as a helical; Signal-anchor for type II membrane protein segment; it reads LALVVGLIGGVAAVASLLLYA. The Periplasmic portion of the chain corresponds to 30–162; sequence LNTNLNLFYT…YTETQKGGSR (133 aa). The heme site is built by histidine 131 and tyrosine 135.

It belongs to the CcmE/CycJ family.

Its subcellular location is the cell inner membrane. Its function is as follows. Heme chaperone required for the biogenesis of c-type cytochromes. Transiently binds heme delivered by CcmC and transfers the heme to apo-cytochromes in a process facilitated by CcmF and CcmH. The sequence is that of Cytochrome c-type biogenesis protein CcmE from Shewanella amazonensis (strain ATCC BAA-1098 / SB2B).